A 559-amino-acid polypeptide reads, in one-letter code: DNA primase (559 aa).

Residues 37-61 (CPFHEERSASFSVNQVKGFYYCFGC) form a CHC2-type zinc finger. Residues 246 to 327 (KQVIVTEGYL…KGGVILFENN (82 aa)) enclose the Toprim domain. Residues Glu252, Asp296, and Asp298 each coordinate Mg(2+).

The protein belongs to the DnaG primase family. Monomer. Interacts with DnaB. Zn(2+) serves as cofactor. The cofactor is Mg(2+).

The catalysed reaction is ssDNA + n NTP = ssDNA/pppN(pN)n-1 hybrid + (n-1) diphosphate.. RNA polymerase that catalyzes the synthesis of short RNA molecules used as primers for DNA polymerase during DNA replication. The sequence is that of DNA primase from Helicobacter pylori (strain J99 / ATCC 700824) (Campylobacter pylori J99).